We begin with the raw amino-acid sequence, 946 residues long: Bifunctional glutamine synthetase adenylyltransferase/adenylyl-removing enzyme (946 aa).

The adenylyl removase stretch occupies residues 1-440 (MKPLSSPLQQ…VFNELIGDDE (440 aa)). The interval 449-946 (SEQWRELWQD…ASWQKWLVEE (498 aa)) is adenylyl transferase.

The protein belongs to the GlnE family. The cofactor is Mg(2+).

It carries out the reaction [glutamine synthetase]-O(4)-(5'-adenylyl)-L-tyrosine + phosphate = [glutamine synthetase]-L-tyrosine + ADP. The catalysed reaction is [glutamine synthetase]-L-tyrosine + ATP = [glutamine synthetase]-O(4)-(5'-adenylyl)-L-tyrosine + diphosphate. In terms of biological role, involved in the regulation of glutamine synthetase GlnA, a key enzyme in the process to assimilate ammonia. When cellular nitrogen levels are high, the C-terminal adenylyl transferase (AT) inactivates GlnA by covalent transfer of an adenylyl group from ATP to specific tyrosine residue of GlnA, thus reducing its activity. Conversely, when nitrogen levels are low, the N-terminal adenylyl removase (AR) activates GlnA by removing the adenylyl group by phosphorolysis, increasing its activity. The regulatory region of GlnE binds the signal transduction protein PII (GlnB) which indicates the nitrogen status of the cell. This is Bifunctional glutamine synthetase adenylyltransferase/adenylyl-removing enzyme from Shigella sonnei (strain Ss046).